The primary structure comprises 331 residues: NADH-quinone oxidoreductase subunit H (331 aa).

The next 9 helical transmembrane spans lie at 5–25, 45–65, 78–98, 122–142, 156–176, 192–212, 245–265, 271–291, and 311–331; these read LFFV…MASL, GPDM…IKLF, FIFL…LAPV, VLYI…AGLA, VVAL…VVMV, IFNW…MASF, FFIG…LLFL, FLFI…FFFF, and WKIL…ALLI.

The protein belongs to the complex I subunit 1 family. In terms of assembly, NDH-1 is composed of 14 different subunits. Subunits NuoA, H, J, K, L, M, N constitute the membrane sector of the complex.

It is found in the cell inner membrane. It catalyses the reaction a quinone + NADH + 5 H(+)(in) = a quinol + NAD(+) + 4 H(+)(out). In terms of biological role, NDH-1 shuttles electrons from NADH, via FMN and iron-sulfur (Fe-S) centers, to quinones in the respiratory chain. The immediate electron acceptor for the enzyme in this species is believed to be ubiquinone. Couples the redox reaction to proton translocation (for every two electrons transferred, four hydrogen ions are translocated across the cytoplasmic membrane), and thus conserves the redox energy in a proton gradient. This subunit may bind ubiquinone. This chain is NADH-quinone oxidoreductase subunit H, found in Campylobacter concisus (strain 13826).